The chain runs to 205 residues: Small ribosomal subunit protein uS4 (205 aa).

Residues 18-45 are disordered; it reads NIWGRPKSPVNRREYGPGQHGQRRKGKL. The S4 RNA-binding domain occupies 94–157; sequence RRLDTVVYRA…KQLAFVLEAS (64 aa).

This sequence belongs to the universal ribosomal protein uS4 family. In terms of assembly, part of the 30S ribosomal subunit. Contacts protein S5. The interaction surface between S4 and S5 is involved in control of translational fidelity.

Functionally, one of the primary rRNA binding proteins, it binds directly to 16S rRNA where it nucleates assembly of the body of the 30S subunit. Its function is as follows. With S5 and S12 plays an important role in translational accuracy. This is Small ribosomal subunit protein uS4 from Rhodopseudomonas palustris (strain BisA53).